Here is a 675-residue protein sequence, read N- to C-terminus: Putative elongation factor TypA-like SVR3, chloroplastic (675 aa).

A chloroplast-targeting transit peptide spans 1–58 (MELSLSTSSASPAVLRRQASPLLHKQQVLGVSFASALKPGGGALRFPSRRPLPRPITC). The tract at residues 43–76 (ALRFPSRRPLPRPITCSASPSTAEPASEVKKKQL) is disordered. The segment covering 59 to 68 (SASPSTAEPA) has biased composition (low complexity). In terms of domain architecture, tr-type G spans 80–275 (DNVRNIAIVA…AIIRCVPGPN (196 aa)).

Belongs to the TRAFAC class translation factor GTPase superfamily. Classic translation factor GTPase family. BipA subfamily.

The protein localises to the plastid. It localises to the chloroplast. In terms of biological role, putative chloroplastic elongation factor involved in response to chilling stress. Required for proper chloroplast rRNA processing and/or translation at low temperature. Involved in plastid protein homeostasis. The chain is Putative elongation factor TypA-like SVR3, chloroplastic (SVR3) from Arabidopsis thaliana (Mouse-ear cress).